A 213-amino-acid polypeptide reads, in one-letter code: Orotate phosphoribosyltransferase (213 aa).

A 5-phospho-alpha-D-ribose 1-diphosphate-binding site is contributed by K26. F34 to F35 lines the orotate pocket. Residues Y72–K73, R99, K100, K103, H105, and D124–A132 each bind 5-phospho-alpha-D-ribose 1-diphosphate. 2 residues coordinate orotate: T128 and R156.

This sequence belongs to the purine/pyrimidine phosphoribosyltransferase family. PyrE subfamily. As to quaternary structure, homodimer. Mg(2+) is required as a cofactor.

The catalysed reaction is orotidine 5'-phosphate + diphosphate = orotate + 5-phospho-alpha-D-ribose 1-diphosphate. Its pathway is pyrimidine metabolism; UMP biosynthesis via de novo pathway; UMP from orotate: step 1/2. Its function is as follows. Catalyzes the transfer of a ribosyl phosphate group from 5-phosphoribose 1-diphosphate to orotate, leading to the formation of orotidine monophosphate (OMP). This Salmonella choleraesuis (strain SC-B67) protein is Orotate phosphoribosyltransferase.